The chain runs to 234 residues: Large ribosomal subunit protein uL1 (234 aa).

It belongs to the universal ribosomal protein uL1 family. In terms of assembly, part of the 50S ribosomal subunit.

In terms of biological role, binds directly to 23S rRNA. The L1 stalk is quite mobile in the ribosome, and is involved in E site tRNA release. Protein L1 is also a translational repressor protein, it controls the translation of the L11 operon by binding to its mRNA. The polypeptide is Large ribosomal subunit protein uL1 (Aliivibrio fischeri (strain MJ11) (Vibrio fischeri)).